Consider the following 469-residue polypeptide: Cytosolic beta-glucosidase (469 aa).

Substrate contacts are provided by Gln-17, His-120, and Asn-164. The Proton donor role is filled by Glu-165. Tyr-309 contributes to the substrate binding site. The active-site Nucleophile is the Glu-373. Residues Trp-417 and 424–425 each bind substrate; that span reads EW.

It belongs to the glycosyl hydrolase 1 family. Klotho subfamily. May interact with NEU2. In terms of processing, the N-terminus is blocked. As to expression, present in small intestine (at protein level). Expressed in liver, small intestine, colon, spleen and kidney. Down-regulated in renal cell carcinomas and hepatocellular carcinomas.

It localises to the cytoplasm. It is found in the cytosol. The enzyme catalyses Hydrolysis of terminal, non-reducing beta-D-glucosyl residues with release of beta-D-glucose.. It carries out the reaction a beta-D-glucosyl-(1&lt;-&gt;1')-N-acylsphing-4-enine + H2O = an N-acylsphing-4-enine + D-glucose. It catalyses the reaction a beta-D-galactosyl-(1&lt;-&gt;1')-N-acylsphing-4-enine + H2O = an N-acylsphing-4-enine + D-galactose. The catalysed reaction is beta-D-glucosyl-(1&lt;-&gt;1)-sphing-4-enine + H2O = sphing-4-enine + D-glucose. The enzyme catalyses beta-D-glucosyl-(1&lt;-&gt;1)-N-octadecanoylsphing-4-enine + H2O = N-octadecanoylsphing-4-enine + D-glucose. It carries out the reaction beta-D-galactosyl-(1&lt;-&gt;1)-sphing-4-enine + H2O = sphing-4-enine + D-galactose. It catalyses the reaction beta-D-galactosyl-(1&lt;-&gt;1')-N-octadecanoylsphing-4-enine + H2O = N-octadecanoylsphing-4-enine + D-galactose. The catalysed reaction is a beta-D-xylosyl-(1&lt;-&gt;1')-N-acylsphing-4-enine + cholesterol = cholesteryl 3-beta-D-xyloside + an N-acylsphing-4-enine. Its activity is regulated as follows. Inhibited by 2,4-dinitrophenyl-2-fluoro-2-deoxy-beta-D-glucopyranoside. Inhibited by sodium taurocholate. Inhibited by alpha-1-C-nonyl-DIX/AnDIX. The glucosylceramidase activity is slightly inhibited by conduritol B epoxide/CBE while the galactosylceramidase activity is not. Its function is as follows. Neutral cytosolic beta-glycosidase with a broad substrate specificity that could play a role in the catabolism of glycosylceramides. Has a significant glucosylceramidase activity in vitro. However, that activity is relatively low and its significance in vivo is not clear. Hydrolyzes galactosylceramides/GalCers, glucosylsphingosines/GlcSphs and galactosylsphingosines/GalSphs. However, the in vivo relevance of these activities is unclear. It can also hydrolyze a broad variety of dietary glycosides including phytoestrogens, flavonols, flavones, flavanones and cyanogens in vitro and could therefore play a role in the metabolism of xenobiotics. Possesses transxylosylase activity in vitro using xylosylated ceramides/XylCers (such as beta-D-xylosyl-(1&lt;-&gt;1')-N-acylsphing-4-enine) as xylosyl donors and cholesterol as acceptor. Could also play a role in the catabolism of cytosolic sialyl free N-glycans. This is Cytosolic beta-glucosidase from Homo sapiens (Human).